A 419-amino-acid chain; its full sequence is Ras association domain-containing protein 8 (419 aa).

One can recognise a Ras-associating domain in the interval 1 to 82 (MELKVWVDGV…VQLILRRTGP (82 aa)). Phosphoserine occurs at positions 105 and 129. The residue at position 131 (Thr-131) is a Phosphothreonine. The disordered stretch occupies residues 372 to 399 (ASQADIETEAPFQSGSLKRPGSSRQLPS). Residues 382 to 399 (PFQSGSLKRPGSSRQLPS) are compositionally biased toward polar residues. At Ser-387 the chain carries Phosphoserine.

In Mus musculus (Mouse), this protein is Ras association domain-containing protein 8 (Rassf8).